The chain runs to 881 residues: Band 4.1-like protein 1 (881 aa).

N-acetylmethionine is present on methionine 1. Residues 1 to 88 (MTTETGPDSE…TPSKAQKSPQ (88 aa)) are disordered. The span at 17-35 (EAPQQPEAAAAVTTPVTPA) shows a compositional bias: low complexity. At threonine 30 the chain carries Phosphothreonine. The segment covering 38–50 (GHPEANSNEKHPS) has biased composition (basic and acidic residues). Position 75 is a phosphoserine (serine 75). Over residues 76–87 (ERTTPSKAQKSP) the composition is skewed to polar residues. Phosphothreonine is present on threonine 79. The region spanning 97–378 (AICRVTLLDA…EHHTFFRLVS (282 aa)) is the FERM domain. Tyrosine 343 is modified (phosphotyrosine). Phosphoserine is present on residues serine 378, serine 430, and serine 437. A disordered region spans residues 428 to 501 (SRSLDGAEFS…HKQEFLDKPE (74 aa)). A compositionally biased stretch (basic and acidic residues) spans 444 to 457 (ENHDAGPDGDKRDE). A phosphoserine mark is found at serine 461 and serine 466. The segment covering 466–501 (SEAEEGEVRTPTKIKELKPEQETTPRHKQEFLDKPE) has biased composition (basic and acidic residues). Threonine 475 carries the post-translational modification Phosphothreonine. A spectrin--actin-binding region spans residues 483 to 541 (KPEQETTPRHKQEFLDKPEDVLLKHQASINELKRTLKEPNSKLIHRDRDWERERRLPSS). At serine 510 the chain carries Phosphoserine. Positions 514–538 (LKRTLKEPNSKLIHRDRDWERERRL) are enriched in basic and acidic residues. A disordered region spans residues 514–596 (LKRTLKEPNS…QERDTVFLKD (83 aa)). Phosphoserine is present on residues serine 540, serine 541, serine 544, and serine 546. Threonine 550 is subject to Phosphothreonine. Residues 550 to 577 (TPEKANERAGLREGSEEKVKPPRPRAPE) show a composition bias toward basic and acidic residues. Phosphoserine occurs at positions 564 and 578. A Phosphothreonine modification is found at threonine 580. Residues serine 639, serine 648, serine 650, serine 667, serine 672, serine 678, and serine 685 each carry the phosphoserine modification. Positions 642–699 (ELDRDKSDSDTEGLLFSRDLNKGAPSQDDESGGIEDSPDRGACSTPDMPQFEPVKTET) are disordered. Threonine 686 is subject to Phosphothreonine. Serine 722, serine 784, and serine 870 each carry phosphoserine. The C-terminal (CTD) stretch occupies residues 746 to 881 (SITTETISTT…EERDKKPQES (136 aa)).

In terms of assembly, interacts with AGAP2. In terms of tissue distribution, highest expression in brain, lower in heart, kidney, pancreas, placenta, lung and skeletal muscle.

It is found in the cytoplasm. The protein localises to the cytoskeleton. Functionally, may function to confer stability and plasticity to neuronal membrane via multiple interactions, including the spectrin-actin-based cytoskeleton, integral membrane channels and membrane-associated guanylate kinases. This chain is Band 4.1-like protein 1, found in Homo sapiens (Human).